The primary structure comprises 589 residues: NADPH-dependent diflavin oxidoreductase 1 (589 aa).

Residues 5 to 151 (ITILYGSETG…YYIEWEAELI (147 aa)) enclose the Flavodoxin-like domain. FMN-binding positions include 11-16 (SETGNA), 60-63 (STTG), 98-107 (VGDSSYVKYN), and glutamate 133. One can recognise an FAD-binding FR-type domain in the interval 202–439 (DGLKLGTVLE…SIQRSSFKYK (238 aa)). FAD is bound by residues arginine 349, 380-383 (RMFS), and 412-415 (GVCT). Residues threonine 452 and 507 to 508 (SR) each bind NADP(+). Residue tryptophan 589 participates in FAD binding.

This sequence belongs to the NADPH-dependent diflavin oxidoreductase NDOR1 family. It in the N-terminal section; belongs to the flavodoxin family. In the C-terminal section; belongs to the flavoprotein pyridine nucleotide cytochrome reductase family. Interacts with DRE2; as part of the cytosolic iron-sulfur (Fe-S) protein assembly (CIA) machinery. FAD is required as a cofactor. Requires FMN as cofactor.

The protein localises to the cytoplasm. It localises to the mitochondrion. The catalysed reaction is 2 oxidized [2Fe-2S]-[protein] + NADPH = 2 reduced [2Fe-2S]-[protein] + NADP(+) + H(+). Its function is as follows. NADPH-dependent reductase which is a central component of the cytosolic iron-sulfur (Fe-S) protein assembly (CIA) machinery. Transfers electrons from NADPH via its FAD and FMN prosthetic groups to the [2Fe-2S] cluster of DRE2, another key component of the CIA machinery. In turn, this reduced cluster provides electrons for assembly of cytosolic iron-sulfur cluster proteins. Positively controls H(2)O(2)-induced cell death. The protein is NADPH-dependent diflavin oxidoreductase 1 of Candida albicans (strain SC5314 / ATCC MYA-2876) (Yeast).